We begin with the raw amino-acid sequence, 841 residues long: Translation initiation factor IF-2 (841 aa).

In terms of domain architecture, tr-type G spans 341–508; the sequence is NRAPVVTIMG…AILLQAEILE (168 aa). The tract at residues 350 to 357 is G1; that stretch reads GHVDHGKT. 350–357 contributes to the GTP binding site; it reads GHVDHGKT. Residues 375–379 are G2; it reads GITQC. The G3 stretch occupies residues 396-399; it reads DTPG. GTP contacts are provided by residues 396–400 and 450–453; these read DTPGH and NKID. The G4 stretch occupies residues 450-453; sequence NKID. Residues 486–488 are G5; sequence SAK.

It belongs to the TRAFAC class translation factor GTPase superfamily. Classic translation factor GTPase family. IF-2 subfamily.

It localises to the cytoplasm. Its function is as follows. One of the essential components for the initiation of protein synthesis. Protects formylmethionyl-tRNA from spontaneous hydrolysis and promotes its binding to the 30S ribosomal subunits. Also involved in the hydrolysis of GTP during the formation of the 70S ribosomal complex. In Wigglesworthia glossinidia brevipalpis, this protein is Translation initiation factor IF-2.